We begin with the raw amino-acid sequence, 149 residues long: Transthyretin (149 aa).

Positions 1-20 are cleaved as a signal peptide; it reads MAFHSLLLLCLAGLAFVSET. Cys32 bears the Sulfocysteine mark. Lys37 is an L-thyroxine binding site. The residue at position 64 (Glu64) is a 4-carboxyglutamate. Glu76 and Ser139 together coordinate L-thyroxine.

Belongs to the transthyretin family. Homotetramer. Dimer of dimers. In the homotetramer, subunits assemble around a central channel that can accommodate two ligand molecules. Interacts with RBP4. Sulfonation of the reactive cysteine Cys-32 enhances the stability of the native conformation of TTR, avoiding misassembly of the protein leading to amyloid formation.

It localises to the secreted. Functionally, thyroid hormone-binding protein. Probably transports thyroxine from the bloodstream to the brain. In Notamacropus eugenii (Tammar wallaby), this protein is Transthyretin (TTR).